A 537-amino-acid chain; its full sequence is Beta-arabinofuranosyltransferase RAY1 (537 aa).

The DXD motif motif lies at 370 to 372 (DVD).

The protein belongs to the glycosyltransferase 77 family.

Its function is as follows. Beta-arabinofuranosyltransferase that transfers specifically an arabinosyl residue from UDP-arabinofuranose to the monosaccharide galactose or beta-methyl-galactoside in vitro. Catalyzes the addition of a beta-arabinofuranose residue onto a beta-galactosyl residue of an Yariv-precipitable wall polymer in vivo. This chain is Beta-arabinofuranosyltransferase RAY1, found in Arabidopsis thaliana (Mouse-ear cress).